The following is a 254-amino-acid chain: Large ribosomal subunit protein uL2B (254 aa).

Residue Lys-46 forms a Glycyl lysine isopeptide (Lys-Gly) (interchain with G-Cter in ubiquitin) linkage. Phosphoserine is present on Ser-52. Lys-93 is covalently cross-linked (Glycyl lysine isopeptide (Lys-Gly) (interchain with G-Cter in ubiquitin)). At Ser-95 the chain carries Phosphoserine. Glycyl lysine isopeptide (Lys-Gly) (interchain with G-Cter in ubiquitin) cross-links involve residues Lys-119 and Lys-145. Phosphoserine is present on residues Ser-159, Ser-160, and Ser-249.

This sequence belongs to the universal ribosomal protein uL2 family. Component of the large ribosomal subunit (LSU). Mature yeast ribosomes consist of a small (40S) and a large (60S) subunit. The 40S small subunit contains 1 molecule of ribosomal RNA (18S rRNA) and 33 different proteins (encoded by 57 genes). The large 60S subunit contains 3 rRNA molecules (25S, 5.8S and 5S rRNA) and 46 different proteins (encoded by 81 genes).

The protein localises to the cytoplasm. Its function is as follows. Component of the ribosome, a large ribonucleoprotein complex responsible for the synthesis of proteins in the cell. The small ribosomal subunit (SSU) binds messenger RNAs (mRNAs) and translates the encoded message by selecting cognate aminoacyl-transfer RNA (tRNA) molecules. The large subunit (LSU) contains the ribosomal catalytic site termed the peptidyl transferase center (PTC), which catalyzes the formation of peptide bonds, thereby polymerizing the amino acids delivered by tRNAs into a polypeptide chain. The nascent polypeptides leave the ribosome through a tunnel in the LSU and interact with protein factors that function in enzymatic processing, targeting, and the membrane insertion of nascent chains at the exit of the ribosomal tunnel. This Saccharomyces cerevisiae (strain ATCC 204508 / S288c) (Baker's yeast) protein is Large ribosomal subunit protein uL2B.